The chain runs to 291 residues: MFLLITYPVFDPVAISLGPIAIRWYALAYIGGIMLGWLYARALLRSEKLWGGPAPISVVQLDDFILWVTIAIIVGGRVGYVLFYNPDYFIRYPAQIFQLWNGGMSFHGGFMGCVAAVILFCRRHGLPILSLGDVATAVGPIGLFLGRIANFINSELWGRPADPGLPWAMVFPNGGPLPRHPSQLYEAALEGILLFTILALMIRLGALKRPGLVLGSFIALYAMARIVAEFFREPDPQLGFLWGGLTMGMLLSIPMVIIGLAIVYAAWSRGSRASDAQASPNSGASTKVDRD.

The next 4 helical transmembrane spans lie at 24 to 44 (WYALAYIGGIMLGWLYARALL), 64 to 84 (FILWVTIAIIVGGRVGYVLFY), 100 to 120 (WNGGMSFHGGFMGCVAAVILF), and 125 to 145 (GLPILSLGDVATAVGPIGLFL). R147 is an a 1,2-diacyl-sn-glycero-3-phospho-(1'-sn-glycerol) binding site. 3 consecutive transmembrane segments (helical) span residues 187–207 (AALEGILLFTILALMIRLGAL), 211–231 (GLVLGSFIALYAMARIVAEFF), and 247–267 (MGMLLSIPMVIIGLAIVYAAW).

Belongs to the Lgt family.

The protein localises to the cell inner membrane. It carries out the reaction L-cysteinyl-[prolipoprotein] + a 1,2-diacyl-sn-glycero-3-phospho-(1'-sn-glycerol) = an S-1,2-diacyl-sn-glyceryl-L-cysteinyl-[prolipoprotein] + sn-glycerol 1-phosphate + H(+). Its pathway is protein modification; lipoprotein biosynthesis (diacylglyceryl transfer). Functionally, catalyzes the transfer of the diacylglyceryl group from phosphatidylglycerol to the sulfhydryl group of the N-terminal cysteine of a prolipoprotein, the first step in the formation of mature lipoproteins. This is Phosphatidylglycerol--prolipoprotein diacylglyceryl transferase from Nitrobacter winogradskyi (strain ATCC 25391 / DSM 10237 / CIP 104748 / NCIMB 11846 / Nb-255).